Here is a 306-residue protein sequence, read N- to C-terminus: L-lactate dehydrogenase (306 aa).

NAD(+) contacts are provided by residues Val11, Asp32, Lys37, and 76 to 77; that span reads GA. 2 residues coordinate substrate: Gln79 and Arg85. Residues Ser98, 115–117, and Ser140 contribute to the NAD(+) site; that span reads VSN. 117–120 contacts substrate; the sequence is NPVD. Position 145-148 (145-148) interacts with substrate; sequence DTAR. Beta-D-fructose 1,6-bisphosphate is bound by residues Arg150 and His165. Catalysis depends on His172, which acts as the Proton acceptor. Phosphotyrosine is present on Tyr214. Thr223 provides a ligand contact to substrate.

This sequence belongs to the LDH/MDH superfamily. LDH family. Homotetramer.

The protein localises to the cytoplasm. It catalyses the reaction (S)-lactate + NAD(+) = pyruvate + NADH + H(+). It functions in the pathway fermentation; pyruvate fermentation to lactate; (S)-lactate from pyruvate: step 1/1. With respect to regulation, allosterically activated by fructose 1,6-bisphosphate (FBP). In terms of biological role, catalyzes the conversion of lactate to pyruvate. In Synechococcus sp. (strain JA-3-3Ab) (Cyanobacteria bacterium Yellowstone A-Prime), this protein is L-lactate dehydrogenase.